A 262-amino-acid chain; its full sequence is Phosphatidylglycerol--prolipoprotein diacylglyceryl transferase (262 aa).

The next 4 membrane-spanning stretches (helical) occupy residues 17–37, 59–79, 94–114, and 121–141; these read FAIH…LLLG, LLFA…TLFY, IWEG…ALYW, and TTFF…LAFG. Arg142 is an a 1,2-diacyl-sn-glycero-3-phospho-(1'-sn-glycerol) binding site. A run of 3 helical transmembrane segments spans residues 176–196, 201–221, and 231–251; these read QIYQ…FYAG, VGQV…LAEY, and LLGL…FFGI.

This sequence belongs to the Lgt family.

The protein localises to the cell inner membrane. The catalysed reaction is L-cysteinyl-[prolipoprotein] + a 1,2-diacyl-sn-glycero-3-phospho-(1'-sn-glycerol) = an S-1,2-diacyl-sn-glyceryl-L-cysteinyl-[prolipoprotein] + sn-glycerol 1-phosphate + H(+). It functions in the pathway protein modification; lipoprotein biosynthesis (diacylglyceryl transfer). In terms of biological role, catalyzes the transfer of the diacylglyceryl group from phosphatidylglycerol to the sulfhydryl group of the N-terminal cysteine of a prolipoprotein, the first step in the formation of mature lipoproteins. In Polynucleobacter necessarius subsp. necessarius (strain STIR1), this protein is Phosphatidylglycerol--prolipoprotein diacylglyceryl transferase.